We begin with the raw amino-acid sequence, 52 residues long: Alpha-1-antiproteinase 3 (52 aa).

The disordered stretch occupies residues 1–20; it reads EDLQGDAVPEEXATKDDNEH.

It belongs to the serpin family. In terms of processing, N-glycosylated; contains glycans with bi- and triantennary side chains. In terms of tissue distribution, plasma.

It is found in the secreted. This chain is Alpha-1-antiproteinase 3, found in Equus caballus (Horse).